A 257-amino-acid polypeptide reads, in one-letter code: 3-deoxy-manno-octulosonate cytidylyltransferase (257 aa).

Belongs to the KdsB family.

The protein localises to the cytoplasm. The catalysed reaction is 3-deoxy-alpha-D-manno-oct-2-ulosonate + CTP = CMP-3-deoxy-beta-D-manno-octulosonate + diphosphate. It participates in nucleotide-sugar biosynthesis; CMP-3-deoxy-D-manno-octulosonate biosynthesis; CMP-3-deoxy-D-manno-octulosonate from 3-deoxy-D-manno-octulosonate and CTP: step 1/1. It functions in the pathway bacterial outer membrane biogenesis; lipopolysaccharide biosynthesis. Activates KDO (a required 8-carbon sugar) for incorporation into bacterial lipopolysaccharide in Gram-negative bacteria. In Albidiferax ferrireducens (strain ATCC BAA-621 / DSM 15236 / T118) (Rhodoferax ferrireducens), this protein is 3-deoxy-manno-octulosonate cytidylyltransferase.